The following is a 389-amino-acid chain: Alkanesulfonate monooxygenase (389 aa).

The protein belongs to the SsuD family.

The catalysed reaction is an alkanesulfonate + FMNH2 + O2 = an aldehyde + FMN + sulfite + H2O + 2 H(+). Its function is as follows. Catalyzes the desulfonation of aliphatic sulfonates. This is Alkanesulfonate monooxygenase from Agrobacterium fabrum (strain C58 / ATCC 33970) (Agrobacterium tumefaciens (strain C58)).